The following is a 303-amino-acid chain: MRLRHVVSSLDLTRDDYFRIFELADKFSNVKKLNYLSGKVVSLAFFEPSTRTAQSFHTAAIKLGADVIGFASEESTSIAKGENLADTIRMLNNYSNCIVMRHKFDGAALFASEISDIPIINAGDGKHEHPTQALIDLYTIYKVFGEIDGRTFGLLGDLKYARTVNSLLRALTRFKPKKVFLISPSQLKVRREILDGLNYPVIETENPYDVIQDIDVLYVTRIQKERFVDEVEYEKVKESYVVDLKLVNMMKKDGIILHPLPRVTEIDRKVDKTTNAKYFYQASLAVPVRMALFYEVLGERKDD.

Residues Arg51 and Thr52 each contribute to the carbamoyl phosphate site. An L-aspartate-binding site is contributed by Lys80. Positions 101, 129, and 132 each coordinate carbamoyl phosphate. 2 residues coordinate L-aspartate: Arg162 and Arg221. Positions 260 and 261 each coordinate carbamoyl phosphate.

Belongs to the aspartate/ornithine carbamoyltransferase superfamily. ATCase family. In terms of assembly, heterooligomer of catalytic and regulatory chains.

The enzyme catalyses carbamoyl phosphate + L-aspartate = N-carbamoyl-L-aspartate + phosphate + H(+). It participates in pyrimidine metabolism; UMP biosynthesis via de novo pathway; (S)-dihydroorotate from bicarbonate: step 2/3. Catalyzes the condensation of carbamoyl phosphate and aspartate to form carbamoyl aspartate and inorganic phosphate, the committed step in the de novo pyrimidine nucleotide biosynthesis pathway. This is Aspartate carbamoyltransferase catalytic subunit from Saccharolobus islandicus (strain Y.N.15.51 / Yellowstone #2) (Sulfolobus islandicus).